A 354-amino-acid polypeptide reads, in one-letter code: DnaJ homolog shv (354 aa).

The N-terminal stretch at 1-22 is a signal peptide; the sequence is MQLIKCLVIIQLSLLLVEESFA. In terms of domain architecture, J spans 25-90; that stretch reads DFYKILNVKK…DKRKTYDRCG (66 aa). 2 N-linked (GlcNAc...) asparagine glycosylation sites follow: Asn260 and Asn312.

As to expression, in the testes, detected at low levels in somatic hub cells, cyst stem cells and the apical tip (at protein level). Levels in the testes decrease with age (at protein level). Expressed at low levels in hub cells, cyst stem cells and germline stem cells, and at high levels in spermatocytes and cyst cells.

The protein localises to the nucleus. It localises to the cell membrane. The protein resides in the secreted. Functionally, maintains stem cell niche architecture in the testes. Activates an extracellular integrin beta-PS pathway which regulates DE-cadherin (shg) levels in somatic hub cells, and is essential for maintaining the number of germline stem cells and the structure and localization of hub cells. In Drosophila melanogaster (Fruit fly), this protein is DnaJ homolog shv.